The sequence spans 213 residues: Cytochrome c biogenesis ATP-binding export protein CcmA (213 aa).

An ABC transporter domain is found at 8–213 (LQATALTCER…RDIDLGQWAA (206 aa)). ATP is bound at residue 40–47 (GPNGSGKT).

The protein belongs to the ABC transporter superfamily. CcmA exporter (TC 3.A.1.107) family. The complex is composed of two ATP-binding proteins (CcmA) and two transmembrane proteins (CcmB).

The protein resides in the cell inner membrane. It catalyses the reaction heme b(in) + ATP + H2O = heme b(out) + ADP + phosphate + H(+). Part of the ABC transporter complex CcmAB involved in the biogenesis of c-type cytochromes; once thought to export heme, this seems not to be the case, but its exact role is uncertain. Responsible for energy coupling to the transport system. The sequence is that of Cytochrome c biogenesis ATP-binding export protein CcmA from Pseudomonas savastanoi pv. phaseolicola (strain 1448A / Race 6) (Pseudomonas syringae pv. phaseolicola (strain 1448A / Race 6)).